A 459-amino-acid polypeptide reads, in one-letter code: V-type ATP synthase beta chain (459 aa).

It belongs to the ATPase alpha/beta chains family.

In terms of biological role, produces ATP from ADP in the presence of a proton gradient across the membrane. The V-type beta chain is a regulatory subunit. The polypeptide is V-type ATP synthase beta chain (Clostridium botulinum (strain Alaska E43 / Type E3)).